A 117-amino-acid polypeptide reads, in one-letter code: uncharacterized protein (117 aa).

It localises to the plastid. It is found in the chloroplast. This is an uncharacterized protein from Chlamydomonas reinhardtii (Chlamydomonas smithii).